We begin with the raw amino-acid sequence, 219 residues long: 7-cyano-7-deazaguanine synthase (219 aa).

10–20 (FSGGQDSTTCL) contacts ATP. Residues C188, C196, C199, and C202 each contribute to the Zn(2+) site.

It belongs to the QueC family. The cofactor is Zn(2+).

The enzyme catalyses 7-carboxy-7-deazaguanine + NH4(+) + ATP = 7-cyano-7-deazaguanine + ADP + phosphate + H2O + H(+). It participates in purine metabolism; 7-cyano-7-deazaguanine biosynthesis. Functionally, catalyzes the ATP-dependent conversion of 7-carboxy-7-deazaguanine (CDG) to 7-cyano-7-deazaguanine (preQ(0)). This chain is 7-cyano-7-deazaguanine synthase, found in Neisseria meningitidis serogroup B (strain ATCC BAA-335 / MC58).